A 203-amino-acid polypeptide reads, in one-letter code: IQ domain-containing protein F3 (203 aa).

Residues 1-12 show a composition bias toward basic and acidic residues; that stretch reads MELDQDKKKETP. The segment at 1–111 is disordered; the sequence is MELDQDKKKE…CETQEADRSE (111 aa). The stretch at 13–82 forms a coiled coil; the sequence is EETENVNEVQ…EADKAILERS (70 aa). A compositionally biased stretch (acidic residues) spans 29–38; sequence DEETEAEAEE. The span at 39–51 shows a compositional bias: basic and acidic residues; that stretch reads ADKAILERSDSVK. Residues 64 to 73 show a composition bias toward acidic residues; that stretch reads DEETEAEAEE. Basic and acidic residues-rich tracts occupy residues 74 to 86 and 96 to 111; these read ADKA…DSVK and QIQE…DRSE. In terms of domain architecture, IQ spans 129–158; sequence VMLAGVKIQAWWRGTLVRRTLLLAALNAWT.

This is IQ domain-containing protein F3 (Iqcf3) from Mus musculus (Mouse).